The sequence spans 453 residues: Folate transporter 1 (453 aa).

Asn-36 carries N-linked (GlcNAc...) asparagine glycosylation. Transmembrane regions (helical) follow at residues 48–68, 73–93, 102–122, 136–156, and 161–181; these read PYWT…TDIL, IVMI…FGKG, VSFG…YSIV, AAAL…ISTH, and LVLN…AIFL. Asn-260 is a glycosylation site (N-linked (GlcNAc...) asparagine). 5 consecutive transmembrane segments (helical) span residues 276–296, 306–326, 331–351, 368–388, and 401–421; these read VANG…SLFI, HGQM…YLCS, VLVA…LITA, IFGC…LVVV, and FVIY…FFMI.

Belongs to the reduced folate carrier (RFC) transporter (TC 2.A.48) family. In terms of tissue distribution, highly expressed in pharynx and posterior part of the intestine. Expressed at lower levels in the body wall muscles, head muscles, and vulva muscles. Highly expressed in the intestine of the early larva, levels decrease in the later stages of development.

It is found in the membrane. Folate transporter. This Caenorhabditis elegans protein is Folate transporter 1 (folt-1).